A 291-amino-acid polypeptide reads, in one-letter code: Probable ABC transporter permease protein PH1038 (291 aa).

Transmembrane regions (helical) follow at residues 7 to 27 (PFFFLLPALTLMVPFVIYPVF), 75 to 95 (IVWIAIHLPTTIFLGLGFALL), 106 to 126 (IIKSIIFLGMVIPMVVGGLII), 133 to 153 (GAGVIPAFFKLIGIEKLAITW), 160 to 180 (ALFSVILGSIWIWTGFSMLMY), 208 to 228 (FVIWPLLRPITVVIVAMTLLW), 232 to 252 (IFDIVYVATGGGPGGASMVLA), and 267 to 287 (YAAVVAVLLTALTFIPALWLI). The region spanning 71–286 (LIHNIVWIAI…ALTFIPALWL (216 aa)) is the ABC transmembrane type-1 domain.

This sequence belongs to the binding-protein-dependent transport system permease family. MalFG subfamily.

The protein localises to the cell membrane. In terms of biological role, probably part of a binding-protein-dependent transport system PH1036/38/39. Probably responsible for the translocation of the substrate across the membrane. This Pyrococcus horikoshii (strain ATCC 700860 / DSM 12428 / JCM 9974 / NBRC 100139 / OT-3) protein is Probable ABC transporter permease protein PH1038.